The primary structure comprises 849 residues: SMY2 homolog 2 (849 aa).

The 57-residue stretch at 149-205 folds into the GYF domain; that stretch reads ESQWKYIDSNGNIQGPFGTNNMSQWYQGGYFTPTLQICRLATSPEPFGVNDRFIRLG. 4 disordered regions span residues 305–505, 527–547, 593–612, and 634–661; these read APLS…TTNL, DLKK…QLDR, TKIN…IKPD, and NRAS…NTSN. Low complexity predominate over residues 308–318; that stretch reads STTSSRSNKTT. Basic and acidic residues predominate over residues 319–331; it reads SSHEEKVPSHEEA. Thr350 bears the Phosphothreonine mark. Composition is skewed to basic and acidic residues over residues 361–375, 387–403, and 425–443; these read TKQE…KEQN, VDRK…KSKD, and LLEE…EEQR. Residues 410 to 484 are a coiled coil; that stretch reads EEQKRFAKAE…EKQKELLNNI (75 aa). Residues 444–455 show a composition bias toward basic residues; the sequence is KLKKEKKLKQKQ. Basic and acidic residues predominate over residues 456-479; it reads KKEEEKLKKKKKEEGKLEKEKQKE. Positions 483–505 are enriched in polar residues; sequence NILTGDTETPSSENTATSITTNL. The span at 594–605 shows a compositional bias: polar residues; that stretch reads KINSQSKINKAN. The span at 644–661 shows a compositional bias: low complexity; that stretch reads SRTPSPSSSALNSSNTSN.

This sequence belongs to the SMY2/mpd2 family. As to quaternary structure, interacts with ribosomes. Interacts with EAP1 and MSL5 (via the GYP domain).

The protein resides in the cytoplasm. This chain is SMY2 homolog 2 (SYH1), found in Saccharomyces cerevisiae (strain ATCC 204508 / S288c) (Baker's yeast).